A 334-amino-acid chain; its full sequence is GTP 3',8-cyclase (334 aa).

Residues 8–244 (RYGRPLRDLR…GEVAQRHAFA (237 aa)) form the Radical SAM core domain. Residue Arg17 coordinates GTP. 2 residues coordinate [4Fe-4S] cluster: Cys24 and Cys28. Residue Tyr30 coordinates S-adenosyl-L-methionine. Cys31 provides a ligand contact to [4Fe-4S] cluster. Arg70 contacts GTP. Gly74 lines the S-adenosyl-L-methionine pocket. GTP is bound at residue Thr101. Ser125 is a binding site for S-adenosyl-L-methionine. Lys163 contacts GTP. S-adenosyl-L-methionine is bound at residue Met197. Cys261 and Cys264 together coordinate [4Fe-4S] cluster. Position 266 to 268 (266 to 268 (RAR)) interacts with GTP. Position 278 (Cys278) interacts with [4Fe-4S] cluster.

The protein belongs to the radical SAM superfamily. MoaA family. As to quaternary structure, monomer and homodimer. [4Fe-4S] cluster is required as a cofactor.

It carries out the reaction GTP + AH2 + S-adenosyl-L-methionine = (8S)-3',8-cyclo-7,8-dihydroguanosine 5'-triphosphate + 5'-deoxyadenosine + L-methionine + A + H(+). It functions in the pathway cofactor biosynthesis; molybdopterin biosynthesis. Functionally, catalyzes the cyclization of GTP to (8S)-3',8-cyclo-7,8-dihydroguanosine 5'-triphosphate. This Xanthomonas axonopodis pv. citri (strain 306) protein is GTP 3',8-cyclase.